The chain runs to 1067 residues: Dorsal-ventral patterning protein tolloid (1067 aa).

Positions 1-36 are cleaved as a signal peptide; the sequence is MKGMRLMPMKMKAKLVVLSVGALWMMMFFLVDYAEG. The propeptide occupies 37–136; the sequence is RRLSQLPESE…NGQPIQRRRR (100 aa). The region spanning 136–338 is the Peptidase M12A domain; sequence RAVTVRKERT…VQANLLYKCA (203 aa). Asn176 is a glycosylation site (N-linked (GlcNAc...) asparagine). Cystine bridges form between Cys179–Cys337, Cys201–Cys223, Cys203–Cys204, Cys340–Cys390, and Cys417–Cys439. His231 serves as a coordination point for Zn(2+). The active site involves Glu232. Zn(2+) contacts are provided by His235 and His241. Short sequence motifs (cell attachment site) lie at residues 245–247 and 325–327; these read RGD. CUB domains lie at 340 to 477 and 478 to 591; these read CGRT…FEVV and CGGD…LMLD. N-linked (GlcNAc...) asparagine glycosylation occurs at Asn441. Cystine bridges form between Cys478–Cys505, Cys532–Cys554, Cys595–Cys606, Cys602–Cys615, Cys617–Cys630, and Cys634–Cys662. The N-linked (GlcNAc...) asparagine glycan is linked to Asn543. The EGF-like 1; calcium-binding domain occupies 591 to 631; that stretch reads DVDECKFTDHGCQHLCINTLGSYQCGCRAGYELQANGKTCE. In terms of domain architecture, CUB 3 spans 634 to 753; that stretch reads CGGVVDATKS…SGFVAKFVID (120 aa). N-linked (GlcNAc...) asparagine glycans are attached at residues Asn644 and Asn677. Cystine bridges form between Cys693–Cys716, Cys757–Cys768, Cys764–Cys777, Cys779–Cys792, Cys797–Cys823, Cys850–Cys872, Cys910–Cys940, and Cys967–Cys989. In terms of domain architecture, EGF-like 2; calcium-binding spans 753–793; that stretch reads DVDECSMNNGGCQHRCRNTFGSYQCSCRNGYTLAENGHNCT. Asn791 carries an N-linked (GlcNAc...) asparagine glycan. 2 CUB domains span residues 797–909 and 910–1026; these read CKFE…FVSE and CGGY…FMAV. N-linked (GlcNAc...) asparagine glycosylation is found at Asn864 and Asn918.

It depends on Zn(2+) as a cofactor.

Metalloprotease which cleaves TGF-beta family ligands daw, Actbeta and myo in vitro. Cleavage of daw enhances its signaling activity. Cleaves dorsal-ventral patterning protein sog. Processes sog more efficiently than metalloprotease tld which also cleaves sog. Required for normal dorsal development. TLD may interact physically with DPP-C protein. This chain is Dorsal-ventral patterning protein tolloid (tld), found in Drosophila melanogaster (Fruit fly).